The chain runs to 78 residues: Acyl carrier protein (78 aa).

The region spanning 2–77 is the Carrier domain; that stretch reads SEIASRVKAI…DAVAYIEEHA (76 aa). Serine 37 bears the O-(pantetheine 4'-phosphoryl)serine mark.

The protein belongs to the acyl carrier protein (ACP) family. In terms of processing, 4'-phosphopantetheine is transferred from CoA to a specific serine of apo-ACP by AcpS. This modification is essential for activity because fatty acids are bound in thioester linkage to the sulfhydryl of the prosthetic group.

The protein localises to the cytoplasm. Its pathway is lipid metabolism; fatty acid biosynthesis. Its function is as follows. Carrier of the growing fatty acid chain in fatty acid biosynthesis. This chain is Acyl carrier protein, found in Bacteroides fragilis (strain ATCC 25285 / DSM 2151 / CCUG 4856 / JCM 11019 / LMG 10263 / NCTC 9343 / Onslow / VPI 2553 / EN-2).